A 691-amino-acid polypeptide reads, in one-letter code: Elongation factor G (691 aa).

The region spanning 8–282 is the tr-type G domain; that stretch reads ERVRNIGIAA…AVVDYLPAPV (275 aa). Residues 17–24, 81–85, and 135–138 contribute to the GTP site; these read AHIDAGKT, DTPGH, and NKMD.

Belongs to the TRAFAC class translation factor GTPase superfamily. Classic translation factor GTPase family. EF-G/EF-2 subfamily.

The protein localises to the cytoplasm. Functionally, catalyzes the GTP-dependent ribosomal translocation step during translation elongation. During this step, the ribosome changes from the pre-translocational (PRE) to the post-translocational (POST) state as the newly formed A-site-bound peptidyl-tRNA and P-site-bound deacylated tRNA move to the P and E sites, respectively. Catalyzes the coordinated movement of the two tRNA molecules, the mRNA and conformational changes in the ribosome. In Prochlorococcus marinus (strain MIT 9515), this protein is Elongation factor G.